The primary structure comprises 1002 residues: Hypoxia up-regulated protein 1 (1002 aa).

A signal peptide spans 1 to 23; the sequence is MARAPRWMLGWLLLACCVPHTEP. Disordered stretches follow at residues 576–698 and 918–1002; these read LFGG…PKKQ and KPKP…NDEL. A compositionally biased stretch (basic and acidic residues) spans 643 to 675; sequence PPKEESQKNEEGEKSEARDPKEDKETVNEEELS. Polar residues predominate over residues 933–947; sequence GKNATGTSESENTIP. 2 stretches are compositionally biased toward basic and acidic residues: residues 951 to 962 and 983 to 1002; these read GKQEEKPEDISP and SSKKEKKPEAGGESRKNDEL. Residues 999-1002 carry the Prevents secretion from ER motif; that stretch reads NDEL.

It belongs to the heat shock protein 70 family.

The protein localises to the endoplasmic reticulum lumen. Has a pivotal role in cytoprotective cellular mechanisms triggered by oxygen deprivation. Promotes HSPA5/BiP-mediated ATP nucleotide exchange and thereby activates the unfolded protein response (UPR) pathway in the presence of endoplasmic reticulum stress. May play a role as a molecular chaperone and participate in protein folding. The chain is Hypoxia up-regulated protein 1 (HYOU1) from Gallus gallus (Chicken).